The primary structure comprises 844 residues: Translation initiation factor IF-2 (844 aa).

Polar residues predominate over residues 120-132 (RNSVNLVQPQQEK). The interval 120–220 (RNSVNLVQPQ…SGKGFKKANP (101 aa)) is disordered. The span at 161-175 (DEEKSSEDKSTESKN) shows a compositional bias: basic and acidic residues. The span at 205-219 (SKAKKASGKGFKKAN) shows a compositional bias: basic residues. In terms of domain architecture, tr-type G spans 343 to 510 (SRAPVVTIMG…AVLLQSEVLE (168 aa)). Residues 352 to 359 (GHVDHGKT) are G1. GTP is bound at residue 352-359 (GHVDHGKT). The G2 stretch occupies residues 377 to 381 (GITQH). Positions 398–401 (DTPG) are G3. Residues 398 to 402 (DTPGH) and 452 to 455 (NKID) each bind GTP. A G4 region spans residues 452-455 (NKID). The interval 488–490 (SAK) is G5.

It belongs to the TRAFAC class translation factor GTPase superfamily. Classic translation factor GTPase family. IF-2 subfamily.

It is found in the cytoplasm. In terms of biological role, one of the essential components for the initiation of protein synthesis. Protects formylmethionyl-tRNA from spontaneous hydrolysis and promotes its binding to the 30S ribosomal subunits. Also involved in the hydrolysis of GTP during the formation of the 70S ribosomal complex. The protein is Translation initiation factor IF-2 of Francisella philomiragia subsp. philomiragia (strain ATCC 25017 / CCUG 19701 / FSC 153 / O#319-036).